Here is a 280-residue protein sequence, read N- to C-terminus: Pantothenate synthetase (280 aa).

30 to 37 (MGALHRGH) is a binding site for ATP. H37 functions as the Proton donor in the catalytic mechanism. Q61 lines the (R)-pantoate pocket. Residue Q61 coordinates beta-alanine. Residue 148–151 (GEKD) coordinates ATP. Q154 is a binding site for (R)-pantoate. ATP contacts are provided by residues V177 and 185–188 (LSSR).

It belongs to the pantothenate synthetase family. Homodimer.

It is found in the cytoplasm. The catalysed reaction is (R)-pantoate + beta-alanine + ATP = (R)-pantothenate + AMP + diphosphate + H(+). It participates in cofactor biosynthesis; (R)-pantothenate biosynthesis; (R)-pantothenate from (R)-pantoate and beta-alanine: step 1/1. Functionally, catalyzes the condensation of pantoate with beta-alanine in an ATP-dependent reaction via a pantoyl-adenylate intermediate. This is Pantothenate synthetase from Azobacteroides pseudotrichonymphae genomovar. CFP2.